The sequence spans 458 residues: Bifunctional protein GlmU (458 aa).

Residues 1–230 are pyrophosphorylase; the sequence is MSLPTYSKLN…EWQVAGINSK (230 aa). UDP-N-acetyl-alpha-D-glucosamine-binding positions include 14-17, Lys-28, Gln-79, and 84-85; these read LAAG and GT. Asp-108 contacts Mg(2+). UDP-N-acetyl-alpha-D-glucosamine is bound by residues Gly-141, Glu-155, Asn-170, and Asn-228. Asn-228 is a binding site for Mg(2+). Residues 231 to 251 are linker; sequence QDLAALERVYQGRYAARLLAK. Positions 252 to 458 are N-acetyltransferase; sequence GVTLADPSRI…NWKRPEKVKK (207 aa). 2 residues coordinate UDP-N-acetyl-alpha-D-glucosamine: Arg-334 and Lys-352. His-364 acts as the Proton acceptor in catalysis. 2 residues coordinate UDP-N-acetyl-alpha-D-glucosamine: Tyr-367 and Asn-378. Residues Ala-381, 387-388, Ser-406, Ala-424, and Arg-441 each bind acetyl-CoA; that span reads NY.

In the N-terminal section; belongs to the N-acetylglucosamine-1-phosphate uridyltransferase family. This sequence in the C-terminal section; belongs to the transferase hexapeptide repeat family. As to quaternary structure, homotrimer. It depends on Mg(2+) as a cofactor.

It localises to the cytoplasm. The catalysed reaction is alpha-D-glucosamine 1-phosphate + acetyl-CoA = N-acetyl-alpha-D-glucosamine 1-phosphate + CoA + H(+). The enzyme catalyses N-acetyl-alpha-D-glucosamine 1-phosphate + UTP + H(+) = UDP-N-acetyl-alpha-D-glucosamine + diphosphate. The protein operates within nucleotide-sugar biosynthesis; UDP-N-acetyl-alpha-D-glucosamine biosynthesis; N-acetyl-alpha-D-glucosamine 1-phosphate from alpha-D-glucosamine 6-phosphate (route II): step 2/2. Its pathway is nucleotide-sugar biosynthesis; UDP-N-acetyl-alpha-D-glucosamine biosynthesis; UDP-N-acetyl-alpha-D-glucosamine from N-acetyl-alpha-D-glucosamine 1-phosphate: step 1/1. It functions in the pathway bacterial outer membrane biogenesis; LPS lipid A biosynthesis. In terms of biological role, catalyzes the last two sequential reactions in the de novo biosynthetic pathway for UDP-N-acetylglucosamine (UDP-GlcNAc). The C-terminal domain catalyzes the transfer of acetyl group from acetyl coenzyme A to glucosamine-1-phosphate (GlcN-1-P) to produce N-acetylglucosamine-1-phosphate (GlcNAc-1-P), which is converted into UDP-GlcNAc by the transfer of uridine 5-monophosphate (from uridine 5-triphosphate), a reaction catalyzed by the N-terminal domain. In Methylobacillus flagellatus (strain ATCC 51484 / DSM 6875 / VKM B-1610 / KT), this protein is Bifunctional protein GlmU.